A 462-amino-acid chain; its full sequence is MAAPELKGTRVTVVGLAKSGVAAARLCAREGARVTVTDRRGEAALGGALAALPASVTRRLGGHDAADFTGADLVVASPGVPLANPEIQAARRRGVPVWGEVELAARFLGGLPIVGITGTNGKSTTTALTGALLARHRRTFVGGNLGTPLSELVLSGEPAAAAVVELSSFQLEGIERFRARVAAVLNVTPDHLDRYPDVDAYAAAKARLFATQEPDDVAVANARDPRALAMAGASRGDLHTFGFGAPVPASARDEGGEPGPGGTAIWYTPRGRAPERYQLHNRALRGRHNRENAMAAVLCARLMGVPGEAVQAGLDAFPGLHHRLELVAEGRGVEWVNDSKATNVDSTFVGLAAFPAGAPRVVLIMGGRGKKAPYAPLRPLFGGRVKALLTIGEDAPAIERELGDLAPTEPCGDLPGAVRRAAVLSGPGDVVLLSPACASYDQFASYEERGEAFRRLATEQAR.

118-124 (GTNGKST) serves as a coordination point for ATP.

Belongs to the MurCDEF family.

Its subcellular location is the cytoplasm. The catalysed reaction is UDP-N-acetyl-alpha-D-muramoyl-L-alanine + D-glutamate + ATP = UDP-N-acetyl-alpha-D-muramoyl-L-alanyl-D-glutamate + ADP + phosphate + H(+). Its pathway is cell wall biogenesis; peptidoglycan biosynthesis. Its function is as follows. Cell wall formation. Catalyzes the addition of glutamate to the nucleotide precursor UDP-N-acetylmuramoyl-L-alanine (UMA). This Anaeromyxobacter dehalogenans (strain 2CP-C) protein is UDP-N-acetylmuramoylalanine--D-glutamate ligase.